The sequence spans 307 residues: Pantothenate kinase (307 aa).

An ATP-binding site is contributed by 90-97; sequence GSVAVGKS.

Belongs to the prokaryotic pantothenate kinase family.

It localises to the cytoplasm. It carries out the reaction (R)-pantothenate + ATP = (R)-4'-phosphopantothenate + ADP + H(+). It participates in cofactor biosynthesis; coenzyme A biosynthesis; CoA from (R)-pantothenate: step 1/5. This is Pantothenate kinase from Limosilactobacillus reuteri subsp. reuteri (strain JCM 1112) (Lactobacillus reuteri).